The following is a 303-amino-acid chain: Mycothiol acetyltransferase (303 aa).

2 consecutive N-acetyltransferase domains span residues 10–156 (ALPG…LAVP) and 162–303 (LAVR…SGPR). Residue glutamate 41 participates in 1D-myo-inositol 2-(L-cysteinylamino)-2-deoxy-alpha-D-glucopyranoside binding. An acetyl-CoA-binding site is contributed by 86 to 88 (LLV). 1D-myo-inositol 2-(L-cysteinylamino)-2-deoxy-alpha-D-glucopyranoside contacts are provided by glutamate 189, lysine 228, and glutamate 235. Residues 239-241 (LGV) and 246-252 (SGAGLGR) each bind acetyl-CoA. 1D-myo-inositol 2-(L-cysteinylamino)-2-deoxy-alpha-D-glucopyranoside is bound at residue tyrosine 272. An acetyl-CoA-binding site is contributed by 277 to 282 (NLRAVR).

Belongs to the acetyltransferase family. MshD subfamily. As to quaternary structure, monomer.

The catalysed reaction is 1D-myo-inositol 2-(L-cysteinylamino)-2-deoxy-alpha-D-glucopyranoside + acetyl-CoA = mycothiol + CoA + H(+). Its function is as follows. Catalyzes the transfer of acetyl from acetyl-CoA to desacetylmycothiol (Cys-GlcN-Ins) to form mycothiol. This Kineococcus radiotolerans (strain ATCC BAA-149 / DSM 14245 / SRS30216) protein is Mycothiol acetyltransferase.